We begin with the raw amino-acid sequence, 651 residues long: Acetyl-coenzyme A synthetase (651 aa).

CoA is bound by residues 193–196 (RRGK) and T312. Residues 388–390 (GEP), 412–417 (DTWWQT), D501, and R516 each bind ATP. S524 serves as a coordination point for CoA. Mg(2+)-binding residues include V538, H540, and V543. At K610 the chain carries N6-acetyllysine.

It belongs to the ATP-dependent AMP-binding enzyme family. Mg(2+) serves as cofactor. Acetylated. Deacetylation by the SIR2-homolog deacetylase activates the enzyme.

The catalysed reaction is acetate + ATP + CoA = acetyl-CoA + AMP + diphosphate. In terms of biological role, catalyzes the conversion of acetate into acetyl-CoA (AcCoA), an essential intermediate at the junction of anabolic and catabolic pathways. AcsA undergoes a two-step reaction. In the first half reaction, AcsA combines acetate with ATP to form acetyl-adenylate (AcAMP) intermediate. In the second half reaction, it can then transfer the acetyl group from AcAMP to the sulfhydryl group of CoA, forming the product AcCoA. The protein is Acetyl-coenzyme A synthetase of Streptomyces coelicolor (strain ATCC BAA-471 / A3(2) / M145).